We begin with the raw amino-acid sequence, 242 residues long: DNA repair protein RecO (242 aa).

The protein belongs to the RecO family. In terms of assembly, monomer.

Functionally, involved in DNA repair and RecF pathway recombination. This is DNA repair protein RecO from Salmonella enteritidis PT4 (strain P125109).